The chain runs to 367 residues: Dihydroxyacetone phosphate transaminase Cj1437c (367 aa).

The residue at position 219 (Lys-219) is an N6-(pyridoxal phosphate)lysine.

It belongs to the class-II pyridoxal-phosphate-dependent aminotransferase family. Requires pyridoxal 5'-phosphate as cofactor.

The catalysed reaction is dihydroxyacetone phosphate + L-glutamate = (S)-serinol phosphate + 2-oxoglutarate. It participates in capsule biogenesis; capsule polysaccharide biosynthesis. In terms of biological role, pyridoxal phosphate (PLP)-dependent transaminase involved in the biosynthesis of amidated D-glucuronic acid structures found on the capsular polysaccharide (CPS) of C.jejuni. Catalyzes the transamination of dihydroxyacetone phosphate (DHAP) to (S)-serinol phosphate in the presence of L-glutamate. Less active with L-aspartate. No activity with dihydroxyacetone or L-alanine. In Campylobacter jejuni subsp. jejuni serotype O:2 (strain ATCC 700819 / NCTC 11168), this protein is Dihydroxyacetone phosphate transaminase Cj1437c.